The following is a 90-amino-acid chain: ATP synthase subunit c (90 aa).

2 helical membrane passes run 4–24 (FVYSAVAAGFGIAIAAFGCGI) and 53–73 (IGLAMIESLSIYALVVSLILI).

This sequence belongs to the ATPase C chain family. F-type ATPases have 2 components, F(1) - the catalytic core - and F(0) - the membrane proton channel. F(1) has five subunits: alpha(3), beta(3), gamma(1), delta(1), epsilon(1). F(0) has three main subunits: a(1), b(2) and c(10-14). The alpha and beta chains form an alternating ring which encloses part of the gamma chain. F(1) is attached to F(0) by a central stalk formed by the gamma and epsilon chains, while a peripheral stalk is formed by the delta and b chains.

It is found in the cell inner membrane. In terms of biological role, f(1)F(0) ATP synthase produces ATP from ADP in the presence of a proton or sodium gradient. F-type ATPases consist of two structural domains, F(1) containing the extramembraneous catalytic core and F(0) containing the membrane proton channel, linked together by a central stalk and a peripheral stalk. During catalysis, ATP synthesis in the catalytic domain of F(1) is coupled via a rotary mechanism of the central stalk subunits to proton translocation. Functionally, key component of the F(0) channel; it plays a direct role in translocation across the membrane. A homomeric c-ring of between 10-14 subunits forms the central stalk rotor element with the F(1) delta and epsilon subunits. This chain is ATP synthase subunit c, found in Syntrophobacter fumaroxidans (strain DSM 10017 / MPOB).